Here is a 95-residue protein sequence, read N- to C-terminus: Selenoprotein K (95 aa).

The helical transmembrane segment at 20 to 42 (LSFLTDMFWGITDFVVMFFQSII) threads the bilayer. The tract at residues 47–95 (TRRGCQNSSSSTRYDDGRGPPGHPRRMGRINHGSGPSAPPMAGGGGUGR) is disordered. Position 93 (Sec93) is a non-standard amino acid, selenocysteine.

The protein belongs to the selenoprotein K family.

The protein localises to the endoplasmic reticulum membrane. The protein resides in the cell membrane. Functionally, required for Ca(2+) flux in immune cells and plays a role in T-cell proliferation and in T-cell and neutrophil migration. Involved in endoplasmic reticulum-associated degradation (ERAD) of soluble glycosylated proteins. Required for cell surface expression of CD36 and involved in macrophage uptake of low-density lipoprotein and in foam cell formation. Required for palmitoylation. The protein is Selenoprotein K (selenok) of Xenopus laevis (African clawed frog).